Here is a 312-residue protein sequence, read N- to C-terminus: Methionyl-tRNA formyltransferase (312 aa).

112-115 (SLLP) lines the (6S)-5,6,7,8-tetrahydrofolate pocket.

This sequence belongs to the Fmt family.

It carries out the reaction L-methionyl-tRNA(fMet) + (6R)-10-formyltetrahydrofolate = N-formyl-L-methionyl-tRNA(fMet) + (6S)-5,6,7,8-tetrahydrofolate + H(+). Attaches a formyl group to the free amino group of methionyl-tRNA(fMet). The formyl group appears to play a dual role in the initiator identity of N-formylmethionyl-tRNA by promoting its recognition by IF2 and preventing the misappropriation of this tRNA by the elongation apparatus. The chain is Methionyl-tRNA formyltransferase from Dehalococcoides mccartyi (strain ATCC BAA-2266 / KCTC 15142 / 195) (Dehalococcoides ethenogenes (strain 195)).